A 229-amino-acid chain; its full sequence is Large ribosomal subunit protein uL1 (229 aa).

Belongs to the universal ribosomal protein uL1 family. Part of the 50S ribosomal subunit.

Binds directly to 23S rRNA. The L1 stalk is quite mobile in the ribosome, and is involved in E site tRNA release. In terms of biological role, protein L1 is also a translational repressor protein, it controls the translation of the L11 operon by binding to its mRNA. This is Large ribosomal subunit protein uL1 from Pasteurella multocida (strain Pm70).